A 548-amino-acid chain; its full sequence is ATP synthase subunit alpha (548 aa).

172-179 (GDRKTGKT) contacts ATP. Residues 510-548 (QFTTSSGESAAPSEPEAEALAADEVGQETVKVNRPAPKK) are disordered. Positions 514–531 (SSGESAAPSEPEAEALAA) are enriched in low complexity.

Belongs to the ATPase alpha/beta chains family. In terms of assembly, F-type ATPases have 2 components, CF(1) - the catalytic core - and CF(0) - the membrane proton channel. CF(1) has five subunits: alpha(3), beta(3), gamma(1), delta(1), epsilon(1). CF(0) has three main subunits: a(1), b(2) and c(9-12). The alpha and beta chains form an alternating ring which encloses part of the gamma chain. CF(1) is attached to CF(0) by a central stalk formed by the gamma and epsilon chains, while a peripheral stalk is formed by the delta and b chains.

The protein localises to the cell membrane. The catalysed reaction is ATP + H2O + 4 H(+)(in) = ADP + phosphate + 5 H(+)(out). In terms of biological role, produces ATP from ADP in the presence of a proton gradient across the membrane. The alpha chain is a regulatory subunit. The chain is ATP synthase subunit alpha from Saccharopolyspora erythraea (strain ATCC 11635 / DSM 40517 / JCM 4748 / NBRC 13426 / NCIMB 8594 / NRRL 2338).